The sequence spans 356 residues: MSTVTITDLARENVRNLTPYQSARRLGGNGDVWLNANEYPTAVEFQLTQQTLNRYPECQPKAVIENYAQYAGVKPEQVLVSRGADEGIELLIRAFCEPGKDAILYCPPTYGMYSVSAETIGVECRTVPTLDNWQLDLQGISDKLDGVKVVYVCSPNNPTGQLINPQDFRTLLELTRGKAIVVADEAYIEFCPQASLAGWLAEYPHLAILRTLSKAFALAGLRCGFTLANEEVINLLMKVIAPYPLSTPVADIAAQALSPQGIVAMRERVAQIIAEREYLIAALKKISCVEQVFDSETNYILARFKASSAVFKSLWDQGIILRDQNKQPSLSGCLRITVGTREESQRVIDALRAEQV.

At lysine 214 the chain carries N6-(pyridoxal phosphate)lysine.

Belongs to the class-II pyridoxal-phosphate-dependent aminotransferase family. Histidinol-phosphate aminotransferase subfamily. Homodimer. Pyridoxal 5'-phosphate is required as a cofactor.

It carries out the reaction L-histidinol phosphate + 2-oxoglutarate = 3-(imidazol-4-yl)-2-oxopropyl phosphate + L-glutamate. The protein operates within amino-acid biosynthesis; L-histidine biosynthesis; L-histidine from 5-phospho-alpha-D-ribose 1-diphosphate: step 7/9. This is Histidinol-phosphate aminotransferase from Escherichia coli O9:H4 (strain HS).